Reading from the N-terminus, the 374-residue chain is Very late expression factor 1 (374 aa).

In terms of domain architecture, Tyr recombinase spans 169–349 (AIDTILNFID…NFDESSSDEE (181 aa)). Catalysis depends on residues arginine 210, lysine 239, arginine 303, and histidine 326. Residues 328-374 (SPASTKPYLNKYNFDESSSDEESGGNNRDSSTGSSANSSSLYYQTGD) form a disordered region. Residue tyrosine 335 is the O-(3'-phospho-DNA)-tyrosine intermediate of the active site. The span at 357 to 367 (SSTGSSANSSS) shows a compositional bias: low complexity.

This sequence belongs to the 'phage' integrase family.

Functionally, involved in very late gene activation. This Orgyia pseudotsugata (Douglas-fir tussock moth) protein is Very late expression factor 1 (VLF-1).